The primary structure comprises 367 residues: Leu/Ile/Val-binding protein (367 aa).

Positions 1–23 (MNIKGKALLAGCIALAFSNMALA) are cleaved as a signal peptide. Cys76 and Cys101 are oxidised to a cystine.

Belongs to the leucine-binding protein family.

It localises to the periplasm. Its function is as follows. This protein is a component of the leucine, isoleucine, valine, (threonine) transport system, which is one of the two periplasmic binding protein-dependent transport systems of the high-affinity transport of the branched-chain amino acids. In Escherichia coli O157:H7, this protein is Leu/Ile/Val-binding protein (livJ).